A 357-amino-acid polypeptide reads, in one-letter code: Protein pelota homolog (357 aa).

Belongs to the eukaryotic release factor 1 family. Pelota subfamily. In terms of assembly, monomer. A divalent metal cation is required as a cofactor.

It localises to the cytoplasm. Its function is as follows. May function in recognizing stalled ribosomes, interact with stem-loop structures in stalled mRNA molecules, and effect endonucleolytic cleavage of the mRNA. May play a role in the release non-functional ribosomes and degradation of damaged mRNAs. Has endoribonuclease activity. The sequence is that of Protein pelota homolog from Methanocella arvoryzae (strain DSM 22066 / NBRC 105507 / MRE50).